The chain runs to 785 residues: Penicillin-binding protein 1A (785 aa).

Residues 1–61 are disordered; the sequence is MPPDDRLTAV…SGPGGPSGPG (61 aa). A compositionally biased stretch (pro residues) spans 33–45; it reads SPPPKPPPPPPPG. Gly residues predominate over residues 46 to 59; it reads RGGGGPSGPGGPSG. Residues 77 to 97 form a helical membrane-spanning segment; it reads IAVAVMVLLPLITFGMAYMIV. The interval 118-299 is transglycosylase; that stretch reads GSEIARIVPP…RWNWVLDGMV (182 aa). E151 functions as the Proton donor; for transglycosylase activity in the catalytic mechanism. The segment at 392–662 is transpeptidase; the sequence is AVVSIDPRTG…EGVKPLVNKW (271 aa). S426 serves as the catalytic Acyl-ester intermediate; for transpeptidase activity. 3 disordered regions span residues 605–626, 690–726, and 738–785; these read SRGH…VQLG, ESFP…QPSV, and GITI…PPPP. 2 stretches are compositionally biased toward pro residues: residues 708 to 721 and 743 to 758; these read PAAP…PTDP and IGPP…PGAP. The span at 759–775 shows a compositional bias: low complexity; it reads GAPVGPGAPEVPVAPGA.

It is found in the cell membrane. The enzyme catalyses [GlcNAc-(1-&gt;4)-Mur2Ac(oyl-L-Ala-gamma-D-Glu-L-Lys-D-Ala-D-Ala)](n)-di-trans,octa-cis-undecaprenyl diphosphate + beta-D-GlcNAc-(1-&gt;4)-Mur2Ac(oyl-L-Ala-gamma-D-Glu-L-Lys-D-Ala-D-Ala)-di-trans,octa-cis-undecaprenyl diphosphate = [GlcNAc-(1-&gt;4)-Mur2Ac(oyl-L-Ala-gamma-D-Glu-L-Lys-D-Ala-D-Ala)](n+1)-di-trans,octa-cis-undecaprenyl diphosphate + di-trans,octa-cis-undecaprenyl diphosphate + H(+). The catalysed reaction is Preferential cleavage: (Ac)2-L-Lys-D-Ala-|-D-Ala. Also transpeptidation of peptidyl-alanyl moieties that are N-acyl substituents of D-alanine.. It functions in the pathway cell wall biogenesis; peptidoglycan biosynthesis. Cell wall formation. Synthesis of cross-linked peptidoglycan from the lipid intermediates. The enzyme has a penicillin-insensitive transglycosylase N-terminal domain (formation of linear glycan strands) and a penicillin-sensitive transpeptidase C-terminal domain (cross-linking of the peptide subunits). This chain is Penicillin-binding protein 1A (ponA1), found in Mycolicibacterium smegmatis (strain ATCC 700084 / mc(2)155) (Mycobacterium smegmatis).